Reading from the N-terminus, the 614-residue chain is Vitamin B12 transporter BtuB (614 aa).

The first 20 residues, 1-20, serve as a signal peptide directing secretion; it reads MIKKASLLTACSVTAFSAWA. Residues 21–157 lie on the Periplasmic side of the membrane; it reads QDTSPDTLVV…NIITTRDEPG (137 aa). The TonB box signature appears at 26-33; sequence DTLVVTAN. Residues 38–152 form the TBDR plug domain; that stretch reads PRSTVLAPTT…IGGVVNIITT (115 aa). Cyanocob(III)alamin-binding positions include leucine 83, serine 85, asparagine 92, and 110-111; that span reads VS. In terms of domain architecture, TBDR beta-barrel spans 155–614; it reads EPGTEISAGW…EYTLSGSYTF (460 aa). Residues 158–165 traverse the membrane as a beta stranded segment; that stretch reads TEISAGWG. Residues 166 to 168 are Extracellular-facing; it reads SNS. The beta stranded transmembrane segment at 169–178 threads the bilayer; the sequence is YQNYDVSTQQ. The Periplasmic portion of the chain corresponds to 179–183; that stretch reads QLGDK. The chain crosses the membrane as a beta stranded span at residues 184–195; sequence TRVTLLGDYAHT. Over 196 to 216 the chain is Extracellular; it reads HGYDVVAYGNTGTQAQTDNDG. Positions 199, 211, 213, and 215 each coordinate Ca(2+). The beta stranded transmembrane segment at 217-227 threads the bilayer; sequence FLSKTLYGALE. At 228-231 the chain is on the periplasmic side; the sequence is HNFT. A beta stranded membrane pass occupies residues 232–248; sequence DAWSGFVRGYGYDNRTN. Ca(2+)-binding residues include tyrosine 249 and aspartate 250. The Extracellular portion of the chain corresponds to 249-262; it reads YDAYYSPGSPLLDT. Alanine 251 is a binding site for cyanocob(III)alamin. Position 261 (aspartate 261) interacts with Ca(2+). A beta stranded transmembrane segment spans residues 263–277; that stretch reads RKLYSQSWDAGLRYN. Glycine 278 is a topological domain (periplasmic). Residues 279-296 traverse the membrane as a beta stranded segment; sequence ELIKSQLITSYSHSKDYN. Topologically, residues 297-308 are extracellular; it reads YDPHYGRYDSSA. Threonine 309 contacts cyanocob(III)alamin. The beta stranded transmembrane segment at 309 to 325 threads the bilayer; it reads TLDEMKQYTVQWANNVI. At 326–327 the chain is on the periplasmic side; the sequence is VG. Residues 328-337 form a beta stranded membrane-spanning segment; the sequence is HGSIGAGVDW. Over 338 to 352 the chain is Extracellular; the sequence is QKQTTTPGTGYVEDG. A beta stranded transmembrane segment spans residues 353–369; it reads YDQRNTGIYLTGLQQVG. Aspartate 370 is a topological domain (periplasmic). The chain crosses the membrane as a beta stranded span at residues 371–381; that stretch reads FTFEGAARSDD. Over 382–384 the chain is Extracellular; the sequence is NSQ. A beta stranded membrane pass occupies residues 385 to 400; sequence FGRHGTWQTSAGWEFI. Topologically, residues 401 to 402 are periplasmic; the sequence is EG. Residues 403-417 form a beta stranded membrane-spanning segment; that stretch reads YRFIASYGTSYKAPN. The Extracellular segment spans residues 418-433; that stretch reads LGQLYGFYGNPNLDPE. Residues 434 to 443 traverse the membrane as a beta stranded segment; the sequence is KSKQWEGAFE. Residues 444–448 are Periplasmic-facing; it reads GLTAG. Residues 449-458 form a beta stranded membrane-spanning segment; the sequence is VNWRISGYRN. Residues 459–472 are Extracellular-facing; that stretch reads DVSDLIDYDDHTLK. Residues 473 to 490 traverse the membrane as a beta stranded segment; that stretch reads YYNEGKARIKGVEATANF. Residues 491–493 are Periplasmic-facing; sequence DTG. A beta stranded membrane pass occupies residues 494–509; it reads PLTHTVSYDYVDARNA. Over 510–516 the chain is Extracellular; it reads ITDTPLL. A cyanocob(III)alamin-binding site is contributed by arginine 517. Residues 517–529 traverse the membrane as a beta stranded segment; sequence RRAKQQVKYQLDW. Residues 530–534 lie on the Periplasmic side of the membrane; sequence QLYDF. The beta stranded transmembrane segment at 535–550 threads the bilayer; that stretch reads DWGITYQYLGTRYDKD. A cyanocob(III)alamin-binding site is contributed by tyrosine 551. At 551 to 557 the chain is on the extracellular side; the sequence is YSSYPYQ. Residues 558–572 form a beta stranded membrane-spanning segment; it reads TVKMGGVSLWDLAVA. Over 573–584 the chain is Periplasmic; the sequence is YPVTSHLTVRGK. A beta stranded transmembrane segment spans residues 585 to 596; the sequence is IANLFDKDYETV. Over 597–601 the chain is Extracellular; sequence YGYQT. The TonB C-terminal box motif lies at 597 to 614; it reads YGYQTAGREYTLSGSYTF. The beta stranded transmembrane segment at 602 to 614 threads the bilayer; the sequence is AGREYTLSGSYTF.

The protein belongs to the TonB-dependent receptor family. BtuB (TC 1.B.14.3.1) subfamily. Interacts with TonB. As to quaternary structure, (Microbial infection) The hairpin motif of the receptor-binding domain of colicin E3 (ColE3) interacts with BtuB without displacing BtuB's central plug. An N-terminal fragment of E3 binds OmpF; trimeric complexes with ColE3, BtuB and OmpF can be cross-linked and immunoprecipitated.

It is found in the cell outer membrane. Calcium increases vitamin B12 binding affinity by a factor of 50-100. With respect to regulation, (Microbial infection) Colicins E1, E3 and K inhibit cyanocobalamin (CN-B12) uptake; E1 and E3 inhibit binding of CN-B12 to cells while colicin K inhibits a later, energy-dependent step of CN-B12. Involved in the active translocation of vitamin B12 (cyanocobalamin) across the outer membrane to the periplasmic space. It derives its energy for transport by interacting with the trans-periplasmic membrane protein TonB. Its function is as follows. (Microbial infection) Acts as a receptor for bacteriophages BF23 and C1, and for A and E colicins. Cyanocobalamin (CN-B12) in solid medium protects against colicins E1 and E3. Does not act as the translocon for colicin E3 (ColE3). The translocon is OmpF; trimeric complexes with ColE3, BtuB and OmpF can be cross-linked and immunoprecipitated. This chain is Vitamin B12 transporter BtuB, found in Escherichia coli (strain K12).